The primary structure comprises 131 residues: Lactose permease (131 aa).

Topologically, residues 1-13 are cytoplasmic; sequence MKFSELAPRERHN. The chain crosses the membrane as a helical span at residues 14 to 34; sequence FVYFLLFFFFYHFIMSAYFPF. Over 35–50 the chain is Periplasmic; the sequence is FPVWLADVNHLTKTET. A helical membrane pass occupies residues 51-71; the sequence is GIVFSSISLFAIIFQPVFGLM. Over 72–80 the chain is Cytoplasmic; the sequence is SDKLGLRKH. The chain crosses the membrane as a helical span at residues 81–101; sequence LLWTITVLLILFAPFFIFVFS. A topological domain (periplasmic) is located at residue P102. The chain crosses the membrane as a helical span at residues 103-123; it reads LLQMNIIAGSLVGGIYLGIVF. The Cytoplasmic segment spans residues 124 to 131; that stretch reads STAPGVGS.

Belongs to the major facilitator superfamily. Oligosaccharide:H(+) symporter (OHS) (TC 2.A.1.5) family.

The protein localises to the cell inner membrane. The catalysed reaction is lactose(in) + H(+)(in) = lactose(out) + H(+)(out). In terms of biological role, responsible for transport of beta-galactosides into the cell, with the concomitant import of a proton (symport system). The protein is Lactose permease (lacY) of Klebsiella pneumoniae.